The sequence spans 237 residues: Phosphoglycolate phosphatase (237 aa).

Residue aspartate 15 is the Nucleophile of the active site. Mg(2+)-binding residues include aspartate 15, aspartate 17, and aspartate 177.

This sequence belongs to the HAD-like hydrolase superfamily. CbbY/CbbZ/Gph/YieH family. Requires Mg(2+) as cofactor.

It catalyses the reaction 2-phosphoglycolate + H2O = glycolate + phosphate. It participates in organic acid metabolism; glycolate biosynthesis; glycolate from 2-phosphoglycolate: step 1/1. Specifically catalyzes the dephosphorylation of 2-phosphoglycolate. Is involved in the dissimilation of the intracellular 2-phosphoglycolate formed during the DNA repair of 3'-phosphoglycolate ends, a major class of DNA lesions induced by oxidative stress. The chain is Phosphoglycolate phosphatase from Caulobacter vibrioides (strain ATCC 19089 / CIP 103742 / CB 15) (Caulobacter crescentus).